The chain runs to 351 residues: Ferredoxin--NADP reductase (351 aa).

Thr-14, Asp-33, Gln-41, Tyr-46, Ala-86, Phe-121, Asp-287, and Thr-328 together coordinate FAD.

The protein belongs to the ferredoxin--NADP reductase type 2 family. As to quaternary structure, homodimer. FAD is required as a cofactor.

The enzyme catalyses 2 reduced [2Fe-2S]-[ferredoxin] + NADP(+) + H(+) = 2 oxidized [2Fe-2S]-[ferredoxin] + NADPH. This Flavobacterium psychrophilum (strain ATCC 49511 / DSM 21280 / CIP 103535 / JIP02/86) protein is Ferredoxin--NADP reductase.